Here is a 492-residue protein sequence, read N- to C-terminus: FAD-containing monooxygenase EthA (492 aa).

Residues Ser-15, Glu-36, 44 to 47 (TWDL), Asp-56, and Val-104 contribute to the FAD site. 54 to 56 (RSD) contacts NADP(+). Residues 183–189 (SGATAVT) and 207–208 (RS) each bind NADP(+).

Belongs to the FAD-binding monooxygenase family. FAD is required as a cofactor.

Its subcellular location is the cell membrane. The catalysed reaction is ethionamide + NADPH + O2 + H(+) = ethionamide S-oxide + NADP(+) + H2O. Functionally, monooxygenase able to convert a wide range of ketones to the corresponding esters or lactones via a Baeyer-Villiger oxidation reaction. Can act on long-chain aliphatic ketones (2-hexanone to 2-dodecanone) and on aromatic ketones (phenylacetone and benzylacetone). Is also able to catalyze enantioselective sulfoxidation of methyl-p-tolylsulfide. In vivo, likely functions as a BVMO, but the exact nature of the physiological substrate(s) remains to be established. Its function is as follows. Is responsible for the activation of several thiocarbamide-containing pro-drugs, such as ethionamide (ETH), isoxyl (ISO) and thiacetazone (TAC), into reactive species. The sequence is that of FAD-containing monooxygenase EthA (ethA) from Mycolicibacterium smegmatis (strain ATCC 700084 / mc(2)155) (Mycobacterium smegmatis).